The chain runs to 398 residues: UDP-N-acetylglucosamine--N-acetylmuramyl-(pentapeptide) pyrophosphoryl-undecaprenol N-acetylglucosamine transferase (398 aa).

Residues 11–13 (TGG), Asn-124, Arg-164, Ser-192, and Gln-318 each bind UDP-N-acetyl-alpha-D-glucosamine.

The protein belongs to the glycosyltransferase 28 family. MurG subfamily.

Its subcellular location is the cell membrane. It catalyses the reaction di-trans,octa-cis-undecaprenyl diphospho-N-acetyl-alpha-D-muramoyl-L-alanyl-D-glutamyl-meso-2,6-diaminopimeloyl-D-alanyl-D-alanine + UDP-N-acetyl-alpha-D-glucosamine = di-trans,octa-cis-undecaprenyl diphospho-[N-acetyl-alpha-D-glucosaminyl-(1-&gt;4)]-N-acetyl-alpha-D-muramoyl-L-alanyl-D-glutamyl-meso-2,6-diaminopimeloyl-D-alanyl-D-alanine + UDP + H(+). It participates in cell wall biogenesis; peptidoglycan biosynthesis. Its function is as follows. Cell wall formation. Catalyzes the transfer of a GlcNAc subunit on undecaprenyl-pyrophosphoryl-MurNAc-pentapeptide (lipid intermediate I) to form undecaprenyl-pyrophosphoryl-MurNAc-(pentapeptide)GlcNAc (lipid intermediate II). The chain is UDP-N-acetylglucosamine--N-acetylmuramyl-(pentapeptide) pyrophosphoryl-undecaprenol N-acetylglucosamine transferase from Deinococcus radiodurans (strain ATCC 13939 / DSM 20539 / JCM 16871 / CCUG 27074 / LMG 4051 / NBRC 15346 / NCIMB 9279 / VKM B-1422 / R1).